A 118-amino-acid chain; its full sequence is Large ribosomal subunit protein bL19 (118 aa).

It belongs to the bacterial ribosomal protein bL19 family.

In terms of biological role, this protein is located at the 30S-50S ribosomal subunit interface and may play a role in the structure and function of the aminoacyl-tRNA binding site. This chain is Large ribosomal subunit protein bL19, found in Parafrankia sp. (strain EAN1pec).